Here is an 826-residue protein sequence, read N- to C-terminus: Homeobox-leucine zipper protein HDG5 (826 aa).

Disordered regions lie at residues 1-34 and 69-119; these read MLTMGEGNVMTSNNRFASPPQQPSSSSPGTIQNP and EMME…HRHT. Positions 23–34 are enriched in low complexity; the sequence is PSSSSPGTIQNP. The span at 88–105 shows a compositional bias: basic and acidic residues; sequence EDPKFGNESDVNELHDDE. Positions 110–119 are enriched in basic residues; it reads AKKKRYHRHT. Residues 111–170 constitute a DNA-binding region (homeobox); it reads KKKRYHRHTNRQIQEMEALFKENPHPDDKQRKRLSAELGLKPRQVKFWFQNRRTQMKAQQ. A coiled-coil region spans residues 165 to 189; that stretch reads QMKAQQDRNENVMLRAENDNLKSEN. One can recognise an START domain in the interval 314 to 558; it reads ADEEKVIAME…LQRQCERIAS (245 aa).

The protein belongs to the HD-ZIP homeobox family. Class IV subfamily. Expressed in shoot apical meristem (SAM) with higher levels in L1 cells and the epidermal layer of young leaves. Expressed in the L1 of apical inflorescence meristems, early flower primordia, carpel and stamen filament epidermis, ovule primordia, nucellus and chalaze.

It is found in the nucleus. In terms of biological role, probable transcription factor. Involved, together with PDF2, in the regulation of flower organs development by promoting the expression of APETALA 3 (AP3) in the epidermis and internal cell layers of developing flowers. The polypeptide is Homeobox-leucine zipper protein HDG5 (Arabidopsis thaliana (Mouse-ear cress)).